The following is a 23-amino-acid chain: GLWQKIKSAAGDLASGIVEAIKS.

In terms of tissue distribution, expressed by the skin parotoid and/or rostral glands.

Its subcellular location is the secreted. Functionally, antibacterial peptide, that adopts an alpha helical conformation which can disrupt bacterial membranes. Each caerin displays a different antimicrobial specificity. This Ranoidea caerulea (Green tree frog) protein is Caerin-4.2.